The sequence spans 193 residues: dCTP deaminase, dUMP-forming (193 aa).

Residues 101 to 106, D119, 127 to 129, Q148, Y162, and Q174 each bind dCTP; these read KSSLGR and TLE. The Proton donor/acceptor role is filled by E129. Positions 160 to 193 are disordered; it reads TPYGSGSLGSKYQGQRGPTPSKGYLNFSSEQDSD. Residues 167–177 are compositionally biased toward polar residues; the sequence is LGSKYQGQRGP.

It belongs to the dCTP deaminase family. Homotrimer.

It carries out the reaction dCTP + 2 H2O = dUMP + NH4(+) + diphosphate. It functions in the pathway pyrimidine metabolism; dUMP biosynthesis; dUMP from dCTP: step 1/1. In terms of biological role, bifunctional enzyme that catalyzes both the deamination of dCTP to dUTP and the hydrolysis of dUTP to dUMP without releasing the toxic dUTP intermediate. In Corynebacterium efficiens (strain DSM 44549 / YS-314 / AJ 12310 / JCM 11189 / NBRC 100395), this protein is dCTP deaminase, dUMP-forming.